The chain runs to 64 residues: Conotoxin Pn-B01122 (64 aa).

Residues 1-22 (MRCLPVFVILLLLIASAPSVDA) form the signal peptide. Residues 23–48 (RPKTKDDIPLVSFQDNAKRALQILSN) constitute a propeptide that is removed on maturation.

It belongs to the conotoxin T superfamily. Contains 2 disulfide bonds that can be either 'C1-C3, C2-C4' or 'C1-C4, C2-C3', since these disulfide connectivities have been observed for conotoxins with cysteine framework V (for examples, see AC P0DQQ7 and AC P81755). Expressed by the venom duct.

It localises to the secreted. This chain is Conotoxin Pn-B01122, found in Conus pennaceus (Feathered cone).